Reading from the N-terminus, the 597-residue chain is Aspartate--tRNA(Asp/Asn) ligase (597 aa).

L-aspartate is bound at residue E175. Residues 199 to 202 form an aspartate region; sequence QQYK. R221 and H454 together coordinate L-aspartate. 221–223 contacts ATP; it reads RDE. E488 serves as a coordination point for ATP. R495 lines the L-aspartate pocket. 540–543 provides a ligand contact to ATP; sequence GIDR.

The protein belongs to the class-II aminoacyl-tRNA synthetase family. Type 1 subfamily. In terms of assembly, homodimer.

The protein localises to the cytoplasm. It catalyses the reaction tRNA(Asx) + L-aspartate + ATP = L-aspartyl-tRNA(Asx) + AMP + diphosphate. Aspartyl-tRNA synthetase with relaxed tRNA specificity since it is able to aspartylate not only its cognate tRNA(Asp) but also tRNA(Asn). Reaction proceeds in two steps: L-aspartate is first activated by ATP to form Asp-AMP and then transferred to the acceptor end of tRNA(Asp/Asn). This Bartonella tribocorum (strain CIP 105476 / IBS 506) protein is Aspartate--tRNA(Asp/Asn) ligase.